The following is a 579-amino-acid chain: Mycobactin import ATP-binding/permease protein IrtB (579 aa).

Over 1–25 (MIRTLLRLVPAEKRGAVAGYAVLTL) the chain is Cytoplasmic. The region spanning 21–299 (AVLTLLSVLL…IADLAPALET (279 aa)) is the ABC transmembrane type-1 domain. The chain crosses the membrane as a helical span at residues 26-46 (LSVLLRAVGAVLLIPLLAALF). Topologically, residues 47-48 (SD) are periplasmic. A helical membrane pass occupies residues 49–69 (TPSDAWLWLGWLTAVTLAGWV). Residues 70–126 (TDTNTARLGFDLGFAVLSRTQHDMADRLPNVAMSWFTPDNTATARQAIAATGPELAG) are Cytoplasmic-facing. 2 helical membrane-spanning segments follow: residues 127–147 (LVVNLLTPLIGAALLPAAIGV) and 148–168 (ALLFVSVPLGLAALAGVAVLF). The Cytoplasmic segment spans residues 169-241 (GALALSGRLS…RLLTMQIPGQ (73 aa)). A helical membrane pass occupies residues 242–262 (VLFSLAGQVALIGFAGMAVWL). Topologically, residues 263–272 (TVRGQLGVPE) are periplasmic. The chain crosses the membrane as a helical span at residues 273-293 (AIALIVVLVRYLEPFAAIADL). The Cytoplasmic portion of the chain corresponds to 294–579 (APALETTRAT…SEWAIGSTAR (286 aa)). Positions 332–565 (IEFDDVRFSY…GGRFAQFWAQ (234 aa)) constitute an ABC transporter domain. 364 to 371 (GPSGSGKT) serves as a coordination point for ATP.

Belongs to the ABC transporter superfamily. Siderophore-Fe(3+) uptake transporter (SIUT) (TC 3.A.1.21) family. Forms a heterodimer with IrtA.

Its subcellular location is the cell inner membrane. With respect to regulation, the ATPase activity of IrtAB is stimulated more than 38-fold in the presence of Fe-MBT, and more than 10-fold in the presence of Fe-cMBT. Part of the ABC transporter complex IrtAB involved in the import of iron-bound mycobactin (Fe-MBT) and carboxymycobactin (Fe-cMBT). Has a preference for Fe-MBT over Fe-cMBT. Transmembrane domains (TMD) form a pore in the membrane and the ATP-binding domain (NBD) is responsible for energy generation. The polypeptide is Mycobactin import ATP-binding/permease protein IrtB (Mycolicibacterium thermoresistibile (strain ATCC 19527 / DSM 44167 / CIP 105390 / JCM 6362 / NCTC 10409 / 316) (Mycobacterium thermoresistibile)).